We begin with the raw amino-acid sequence, 287 residues long: L-cysteine S-thiosulfotransferase subunit SoxA (287 aa).

Positions 1–26 (MKTMTGRLVAAALVCGGAFSGAAVSA) are cleaved as a signal peptide. The region spanning 74 to 168 (DDFENSGMVF…AMVALIASVS (95 aa)) is the Cytochrome c domain. The heme c site is built by Cys102, Cys105, His106, Cys140, Cys203, Cys206, and His207. Position 244 (Arg244) interacts with substrate. Cys248 serves as a coordination point for heme c. The Cysteine persulfide intermediate role is filled by Cys248.

This sequence belongs to the SoxA family. As to quaternary structure, heterodimer of SoxA and SoxX. The cofactor is heme c. Post-translationally, cysteine persulfide at Cys-248.

The protein resides in the periplasm. The enzyme catalyses L-cysteinyl-[SoxY protein] + thiosulfate + 2 Fe(III)-[cytochrome c] = S-sulfosulfanyl-L-cysteinyl-[SoxY protein] + 2 Fe(II)-[cytochrome c] + 2 H(+). The catalysed reaction is S-sulfanyl-L-cysteinyl-[SoxY protein] + thiosulfate + 2 Fe(III)-[cytochrome c] = S-(2-sulfodisulfanyl)-L-cysteinyl-[SoxY protein] + 2 Fe(II)-[cytochrome c] + 2 H(+). C-type diheme cytochrome, which is part of the SoxAX cytochrome complex involved in sulfur oxidation. The SoxAX complex catalyzes the formation of a heterodisulfide bond between the conserved cysteine residue on a sulfur carrier SoxYZ complex subunit SoxY and thiosulfate or other inorganic sulfur substrates. This leads to the liberation of two electrons, which may be transferred from the SoxAX complex to another cytochrome c and which then may be used for reductive CO(2) fixation. In Rhodovulum sulfidophilum (Rhodobacter sulfidophilus), this protein is L-cysteine S-thiosulfotransferase subunit SoxA.